Reading from the N-terminus, the 306-residue chain is Glutathione transport system permease protein GsiC (306 aa).

Topologically, residues 1-8 (MLNYVIKR) are cytoplasmic. Residues 9–29 (LLGLIPTLFIVSVLVFLFVHM) traverse the membrane as a helical segment. The Periplasmic portion of the chain corresponds to 30 to 102 (LPGDPARLIA…SRFMPTLWLT (73 aa)). The region spanning 95 to 292 (FMPTLWLTIT…LEFILINLVV (198 aa)) is the ABC transmembrane type-1 domain. Residues 103–123 (ITSMVWAVIFGMAAGIIAAVW) form a helical membrane-spanning segment. Topologically, residues 124–134 (RNRWPDRLSMT) are cytoplasmic. A helical membrane pass occupies residues 135–155 (IAVSGISFPAFALGMLLIQVF). The Periplasmic portion of the chain corresponds to 156–168 (SVELGWLPTVGAD). The chain crosses the membrane as a helical span at residues 169-189 (SWQHYILPSLTLGAAVAAVMA). The Cytoplasmic segment spans residues 190 to 228 (RFTRASFVDVLSEDYMRTARAKGVSETWVVLKHGLRNAM). Residues 229–249 (IPVVTMMGLQFGFLLGGSIVV) form a helical membrane-spanning segment. Residues 250–277 (EKVFNWPGLGRLLVDSVEMRDYPVIQAE) lie on the Periplasmic side of the membrane. The chain crosses the membrane as a helical span at residues 278–298 (ILLFSLEFILINLVVDVLYAA). The Cytoplasmic portion of the chain corresponds to 299–306 (INPAIRYK).

The protein belongs to the binding-protein-dependent transport system permease family. In terms of assembly, the complex is composed of two ATP-binding proteins (GsiA), two transmembrane proteins (GsiC and GsiD) and a solute-binding protein (GsiB).

It is found in the cell inner membrane. In terms of biological role, part of the ABC transporter complex GsiABCD involved in glutathione import. Probably responsible for the translocation of the substrate across the membrane. This Escherichia coli O6:H1 (strain CFT073 / ATCC 700928 / UPEC) protein is Glutathione transport system permease protein GsiC.